The following is a 318-amino-acid chain: Protein W (318 aa).

Disordered regions lie at residues 1–23 and 38–318; these read MDQD…GGRE and SEPT…KKGA. Residues 7-20 show a composition bias toward basic and acidic residues; that stretch reads ILKEDSEVEREAPG. The segment covering 50–59 has biased composition (polar residues); that stretch reads LHNTINTPQG. Ser-68 carries the phosphoserine; by host modification. Residues 83–101 show a composition bias toward basic and acidic residues; it reads RSGEESRVSGRTSKPEAEA. Ser-125 is subject to Phosphoserine; by host. Residues 150-168 are compositionally biased toward basic and acidic residues; it reads GIEDENREMAAHPDKRGED. Polar residues predominate over residues 191-206; the sequence is ASNNGRSMEPGSSHSA. Ser-192, Ser-249, Ser-257, and Ser-260 each carry phosphoserine; by host.

This Sendai virus (strain Harris) (SeV) protein is Protein W (P/V/C).